The following is a 1377-amino-acid chain: MKEIKDFEKIRIKIASRDQIRSWSYGEVKKSETINYRTLRPEKDGLFCERIFGTTKEWECYCGKFKSIRYKGIICDRCNVEVTHFKVRRERMGHIELSAPVAHIWYYKYIPSRIGLLLDITASNLNSILYYEKYIVIEPGDTDLKKMQLLNEDEYSEAKERYGMSFSASMGAEAIKTLLENLDLDELSSKLRLQMIDKDDKTDKKLLRRLEIIENFKVSGNKPEWMIMDVLPVIPPEIRPMVQLDGGRFATSDLNDLYRRVINRNNRLRKLLLLNAPEIIVRNEKRMLQESVDSLFDNSHKRKVVKGTSNRPLKSLSDALKGKQGRFRQNLLGKRVDYSGRSVIVVGPELKLHQCGIPAKMALELFKPFVIRKLIESESVFNIKRAKSLIEQEVDEVWQILDNVIKEHPVLLNRAPTLHRLGIQAFEPVLVEGKAIKLHPLVCHAYNADFDGDQMAVHVPLTPAAQAESWALMLSTNNLLNPANGHPIVFPSQDIVLGLYYLTMERKNVVGEGRKFANFNHVLLAINNKSLDYNAQIYVKIDGEYIATTAGRVVFNEALPGKITFVNKTLSDYELQSLISEVYVIYGSSIVIEMLDIIKELGFRYATKFGCTISMSDIIVPEEKKIYVDKANREIAKIQNDYTKGVITGEERYNNVVSVWSKTNEELTNKMMEILKKDRDGFNVIYMMADSGARGSRNQIRQLAGMRGLMAKTSGDIIELPIISNFKEGLSVIEFFISTNGARKGLADTALKTADAGYLTRRLVDIAQDVVVRIEDCGTINGIKVEALKNGEEIVEPLREKAVGSYSIERIKSPITGEIILDVNEEVTEDKIKLLETVGIDKLVIRSVLTCEAEHGVCQKCYGRDFSNNKPVNIGEAVGIIAAQSIGQPGTQLTMRTFHIGGVAQAGSEDDKIALKNAFILNGLEGFNVQVDDGLLFTRKGTLKVINVIYEENIKEIKELKVLDSQKVIKGMPLFINKNGIDVLSTHIGYVKIKDDKLMIVSEEQEISLKAGTRLEINVGDYVEAGRVIGTFDPFAEPIIAEFKGKVKFKDIILGTTLKEEINLETGNIEKRITDQVFESLDPRILIINDRGVEITSYVLPGDAYLQVEDGQDINIGDVIAKLSKGSEKTQDITGGLPRVNDLFETRIPKNLTEMAKVSGIVQFKAIQKGKRLINVLDEYGVEHKHYIPAGKHLLVRDGDVVKAGDMLCDGRINPHDVLEILGGISLQEFLLAEIQDVYRKQGVSINDKHIGVIIKQMMKKVKIVSVGDTNFVYNQKVDKHAFYEQNKRVIEQGGEPAVASPILIGITKASLNIDSFISAASFQETTKVLTDASIAGSVDDLKGLKENVVIGHLIPTGTGMNLYKRVKVRENSSSEV.

Zn(2+) contacts are provided by Cys-60, Cys-62, Cys-75, and Cys-78. Mg(2+) is bound by residues Asp-449, Asp-451, and Asp-453. Zn(2+) is bound by residues Cys-777, Cys-851, Cys-858, and Cys-861.

It belongs to the RNA polymerase beta' chain family. As to quaternary structure, the RNAP catalytic core consists of 2 alpha, 1 beta, 1 beta' and 1 omega subunit. When a sigma factor is associated with the core the holoenzyme is formed, which can initiate transcription. Requires Mg(2+) as cofactor. Zn(2+) is required as a cofactor.

The enzyme catalyses RNA(n) + a ribonucleoside 5'-triphosphate = RNA(n+1) + diphosphate. Functionally, DNA-dependent RNA polymerase catalyzes the transcription of DNA into RNA using the four ribonucleoside triphosphates as substrates. This is DNA-directed RNA polymerase subunit beta' from Borrelia hermsii (strain HS1 / DAH).